Reading from the N-terminus, the 416-residue chain is Gamma-glutamyl phosphate reductase (416 aa).

Belongs to the gamma-glutamyl phosphate reductase family.

It is found in the cytoplasm. It carries out the reaction L-glutamate 5-semialdehyde + phosphate + NADP(+) = L-glutamyl 5-phosphate + NADPH + H(+). Its pathway is amino-acid biosynthesis; L-proline biosynthesis; L-glutamate 5-semialdehyde from L-glutamate: step 2/2. Catalyzes the NADPH-dependent reduction of L-glutamate 5-phosphate into L-glutamate 5-semialdehyde and phosphate. The product spontaneously undergoes cyclization to form 1-pyrroline-5-carboxylate. The sequence is that of Gamma-glutamyl phosphate reductase from Glaesserella parasuis serovar 5 (strain SH0165) (Haemophilus parasuis).